Here is a 409-residue protein sequence, read N- to C-terminus: Nucleoprotein (409 aa).

Disordered stretches follow at residues 1–32 (MASG…SSGN), 47–84 (PQPK…KSGR), 121–145 (ADTK…LRFS), and 164–194 (RSGR…GAED). The interval 29–160 (SSGNASWFQA…GNFRWDFIPL (132 aa)) is RNA-binding. The 126-residue stretch at 31–156 (GNASWFQAIK…GGPDGNFRWD (126 aa)) folds into the CoV N NTD domain. A compositionally biased stretch (polar residues) spans 57-68 (PDNNNIKPSQQH). Basic residues predominate over residues 70 to 84 (YWRRQARYKPGKSGR). Positions 164–179 (RSGRSTAASSAASSRA) are enriched in low complexity. The span at 180-192 (PSREGSRGRRSGA) shows a compositional bias: basic and acidic residues. Phosphoserine; by host is present on serine 190. One can recognise a CoV N CTD domain in the interval 215-331 (TKAKADEMAH…QCVDGVGTRP (117 aa)). Residues 226-333 (RYCKRTIPPG…VDGVGTRPKD (108 aa)) are dimerization. The cysteines at positions 320 and 323 are disulfide-linked. Positions 326–409 (GVGTRPKDDE…GDSALGENEL (84 aa)) are disordered. Positions 358-367 (QRPKKEKKPK) are enriched in basic residues. Over residues 368–384 (KQDDEVDKALTSDEERN) the composition is skewed to basic and acidic residues. Threonine 378 carries the phosphothreonine; by host modification. Serine 379 carries the post-translational modification Phosphoserine; by host.

It belongs to the gammacoronavirus nucleocapsid protein family. Homooligomer. Both monomeric and oligomeric forms interact with RNA. Interacts with protein M. Interacts with NSP3; this interaction serves to tether the genome to the newly translated replicase-transcriptase complex at a very early stage of infection. In terms of processing, ADP-ribosylated. The ADP-ribosylation is retained in the virion during infection. Phosphorylated on serine and threonine residues.

The protein resides in the virion. Its subcellular location is the host endoplasmic reticulum-Golgi intermediate compartment. It localises to the host Golgi apparatus. In terms of biological role, packages the positive strand viral genome RNA into a helical ribonucleocapsid (RNP) and plays a fundamental role during virion assembly through its interactions with the viral genome and membrane protein M. Plays an important role in enhancing the efficiency of subgenomic viral RNA transcription as well as viral replication. This is Nucleoprotein from Gallus gallus (Chicken).